Here is a 124-residue protein sequence, read N- to C-terminus: Large ribosomal subunit protein bL12 (124 aa).

The protein belongs to the bacterial ribosomal protein bL12 family. As to quaternary structure, homodimer. Part of the ribosomal stalk of the 50S ribosomal subunit. Forms a multimeric L10(L12)X complex, where L10 forms an elongated spine to which 2 to 4 L12 dimers bind in a sequential fashion. Binds GTP-bound translation factors.

Functionally, forms part of the ribosomal stalk which helps the ribosome interact with GTP-bound translation factors. Is thus essential for accurate translation. In Vesicomyosocius okutanii subsp. Calyptogena okutanii (strain HA), this protein is Large ribosomal subunit protein bL12.